Consider the following 319-residue polypeptide: CD2 antigen cytoplasmic tail-binding protein 2 homolog (319 aa).

Disordered stretches follow at residues 1–57 (MASK…EDDV) and 105–124 (NAFDPAKDEENSSDEEKNEP). Positions 12-24 (KVKEESFKKHTLD) are enriched in basic and acidic residues. Residues Ser25 and Ser30 each carry the phosphoserine modification. Acidic residues predominate over residues 25-47 (SDEEDSDDYEREYLNDSDIEGGE). Tyr37 carries the phosphotyrosine modification. Ser41 carries the post-translational modification Phosphoserine. The segment covering 109–124 (PAKDEENSSDEEKNEP) has biased composition (basic and acidic residues). Residues 260-316 (EVTWEFKWSQDETDIQGPFSTEKMLKWSQENYFKNGVYVRKCGENTNFYTSNRIDFD) enclose the GYF domain.

It is found in the nucleus. In terms of biological role, required for embryonic epithelial tissue repair, but not for the assembly of the actomyosin cable at the wound edge. Probably acts downstream of rl in the regulation of Ddc and msn transcription to promote wound healing. In Drosophila melanogaster (Fruit fly), this protein is CD2 antigen cytoplasmic tail-binding protein 2 homolog (holn1).